The sequence spans 311 residues: tRNA-cytidine(32) 2-sulfurtransferase (311 aa).

The PP-loop motif signature appears at 58–63 (SGGKDS). 3 residues coordinate [4Fe-4S] cluster: C133, C136, and C224.

It belongs to the TtcA family. As to quaternary structure, homodimer. Mg(2+) serves as cofactor. It depends on [4Fe-4S] cluster as a cofactor.

It localises to the cytoplasm. It catalyses the reaction cytidine(32) in tRNA + S-sulfanyl-L-cysteinyl-[cysteine desulfurase] + AH2 + ATP = 2-thiocytidine(32) in tRNA + L-cysteinyl-[cysteine desulfurase] + A + AMP + diphosphate + H(+). It functions in the pathway tRNA modification. Its function is as follows. Catalyzes the ATP-dependent 2-thiolation of cytidine in position 32 of tRNA, to form 2-thiocytidine (s(2)C32). The sulfur atoms are provided by the cysteine/cysteine desulfurase (IscS) system. The chain is tRNA-cytidine(32) 2-sulfurtransferase from Polaromonas sp. (strain JS666 / ATCC BAA-500).